The sequence spans 598 residues: Chaperone protein DnaK (598 aa).

Phosphothreonine; by autocatalysis is present on T175. Over residues 571–591 the composition is skewed to low complexity; that stretch reads AKSAAASSNKDDSLNNNSSSN. A disordered region spans residues 571–598; sequence AKSAAASSNKDDSLNNNSSSNNDEETFE.

Belongs to the heat shock protein 70 family.

In terms of biological role, acts as a chaperone. This chain is Chaperone protein DnaK, found in Mycoplasmopsis agalactiae (strain NCTC 10123 / CIP 59.7 / PG2) (Mycoplasma agalactiae).